Consider the following 294-residue polypeptide: 4-hydroxy-tetrahydrodipicolinate synthase (294 aa).

Thr45 contributes to the pyruvate binding site. The active-site Proton donor/acceptor is the Tyr133. Lys161 (schiff-base intermediate with substrate) is an active-site residue. Residue Ile203 participates in pyruvate binding.

It belongs to the DapA family. In terms of assembly, homotetramer; dimer of dimers.

Its subcellular location is the cytoplasm. It catalyses the reaction L-aspartate 4-semialdehyde + pyruvate = (2S,4S)-4-hydroxy-2,3,4,5-tetrahydrodipicolinate + H2O + H(+). The protein operates within amino-acid biosynthesis; L-lysine biosynthesis via DAP pathway; (S)-tetrahydrodipicolinate from L-aspartate: step 3/4. Its function is as follows. Catalyzes the condensation of (S)-aspartate-beta-semialdehyde [(S)-ASA] and pyruvate to 4-hydroxy-tetrahydrodipicolinate (HTPA). The chain is 4-hydroxy-tetrahydrodipicolinate synthase from Buchnera aphidicola subsp. Schizaphis graminum (strain Sg).